An 853-amino-acid chain; its full sequence is DNA mismatch repair protein MutS (853 aa).

613 to 620 (GPNMGGKS) contributes to the ATP binding site.

It belongs to the DNA mismatch repair MutS family.

Its function is as follows. This protein is involved in the repair of mismatches in DNA. It is possible that it carries out the mismatch recognition step. This protein has a weak ATPase activity. The chain is DNA mismatch repair protein MutS from Vibrio campbellii (strain ATCC BAA-1116).